Consider the following 192-residue polypeptide: Imidazole glycerol phosphate synthase subunit HisH (192 aa).

The Glutamine amidotransferase type-1 domain maps to 1–192 (MIVIVDYGLG…QAIQGGFIND (192 aa)). C77 (nucleophile) is an active-site residue. Active-site residues include H169 and E171.

Heterodimer of HisH and HisF.

The protein resides in the cytoplasm. The catalysed reaction is 5-[(5-phospho-1-deoxy-D-ribulos-1-ylimino)methylamino]-1-(5-phospho-beta-D-ribosyl)imidazole-4-carboxamide + L-glutamine = D-erythro-1-(imidazol-4-yl)glycerol 3-phosphate + 5-amino-1-(5-phospho-beta-D-ribosyl)imidazole-4-carboxamide + L-glutamate + H(+). It carries out the reaction L-glutamine + H2O = L-glutamate + NH4(+). Its pathway is amino-acid biosynthesis; L-histidine biosynthesis; L-histidine from 5-phospho-alpha-D-ribose 1-diphosphate: step 5/9. Functionally, IGPS catalyzes the conversion of PRFAR and glutamine to IGP, AICAR and glutamate. The HisH subunit catalyzes the hydrolysis of glutamine to glutamate and ammonia as part of the synthesis of IGP and AICAR. The resulting ammonia molecule is channeled to the active site of HisF. The chain is Imidazole glycerol phosphate synthase subunit HisH from Staphylococcus aureus (strain bovine RF122 / ET3-1).